Consider the following 77-residue polypeptide: Sec-independent protein translocase protein TatA (77 aa).

A helical transmembrane segment spans residues 1–21 (MGGISIWQLLIIALIVVLLFG). 2 stretches are compositionally biased toward basic and acidic residues: residues 47–56 (EKKALEDKEA) and 65–77 (TEKKPEADKKEQA). The segment at 47-77 (EKKALEDKEAAAQTTQQATEKKPEADKKEQA) is disordered.

This sequence belongs to the TatA/E family. In terms of assembly, the Tat system comprises two distinct complexes: a TatABC complex, containing multiple copies of TatA, TatB and TatC subunits, and a separate TatA complex, containing only TatA subunits. Substrates initially bind to the TatABC complex, which probably triggers association of the separate TatA complex to form the active translocon.

Its subcellular location is the cell inner membrane. In terms of biological role, part of the twin-arginine translocation (Tat) system that transports large folded proteins containing a characteristic twin-arginine motif in their signal peptide across membranes. TatA could form the protein-conducting channel of the Tat system. The chain is Sec-independent protein translocase protein TatA from Shewanella amazonensis (strain ATCC BAA-1098 / SB2B).